The primary structure comprises 317 residues: Protease 7 (317 aa).

Positions 1 to 20 are cleaved as a signal peptide; it reads MRAKLLGIVLTTPIAISSFA. Over 21–31 the chain is Periplasmic; the sequence is STETLSFTPDN. A beta stranded membrane pass occupies residues 32–41; that stretch reads INADISLGTL. Residues 42-69 lie on the Extracellular side of the membrane; the sequence is SGKTKERVYLAEEGGRKVSQLDWKFNNA. Residues 70-78 form a beta stranded membrane-spanning segment; the sequence is AIIKGAINW. Residues 79–83 lie on the Periplasmic side of the membrane; the sequence is DLMPQ. A beta stranded membrane pass occupies residues 84–92; sequence ISIGAAGWT. Residues 93-130 are Extracellular-facing; sequence TLGSRGGNMVDQDWMDSSNPGTWTDESRHPDTQLNYAN. Active-site residues include Asp103 and Asp105. The chain crosses the membrane as a beta stranded span at residues 131–140; the sequence is EFDLNIKGWL. Over 141–145 the chain is Periplasmic; that stretch reads LNEPN. The beta stranded transmembrane segment at 146–156 threads the bilayer; that stretch reads YRLGLMAGYQE. The Extracellular portion of the chain corresponds to 157 to 197; that stretch reads SRYSFTARGGSYIYSSEEGFRDDIGSFPNGERAIGYKQRFK. Residues 198–209 traverse the membrane as a beta stranded segment; it reads MPYIGLTGSYRY. At 210 to 211 the chain is on the periplasmic side; that stretch reads ED. Residues 212–221 traverse the membrane as a beta stranded segment; sequence FELGGTFKYS. Over 222 to 250 the chain is Extracellular; it reads GWVESSDNDEHYDPGKRITYRSKVKDQNY. Catalysis depends on residues Asp230 and His232. Residues 251–261 form a beta stranded membrane-spanning segment; that stretch reads YSVAVNAGYYV. At 262 to 264 the chain is on the periplasmic side; sequence TPN. The beta stranded transmembrane segment at 265-274 threads the bilayer; that stretch reads AKVYVEGAWN. Topologically, residues 275-306 are extracellular; that stretch reads RVTNKKGNTSLYDHNNNTSDYSKNGAGIENYN. The beta stranded transmembrane segment at 307–316 threads the bilayer; that stretch reads FITTAGLKYT. Residue Phe317 is a topological domain, periplasmic.

It belongs to the peptidase A26 family. As to quaternary structure, homopentamer.

The protein localises to the cell outer membrane. It catalyses the reaction Has a virtual requirement for Arg in the P1 position and a slightly less stringent preference for this residue in the P1' position, which can also contain Lys, Gly or Val.. Its activity is regulated as follows. Inhibited by zinc. Its function is as follows. Protease that can cleave T7 RNA polymerase, ferric enterobactin receptor protein (FEP), antimicrobial peptide protamine and other proteins. This protease has a specificity for paired basic residues. This Escherichia coli (strain K12) protein is Protease 7 (ompT).